The primary structure comprises 64 residues: Defensin beta 4A (64 aa).

Positions 1-23 (MRVLYLLFSFLFIFLMPLPGVFG) are cleaved as a signal peptide. 3 disulfides stabilise this stretch: C31–C60, C38–C53, and C43–C61. The segment at 33–48 (KSGAICHPVFCPRRYK) is phosphatidylinositol 4,5-bisphosphate (PIP2) binding.

Belongs to the beta-defensin family. LAP/TAP subfamily. Monomer. Homodimer. As to expression, expressed in lung epithelial cells (at protein level). Expressed in foreskin, lung and trachea. Lower expression in kidney, uterus and salivary gland tissue. Expressed in epithelial cells of the respiratory tract, with higher expression in distal parenchyma of the lung, trachea, and tonsils, and lower expression in pharynx and adenoid, and low expression in tongue and larynx.

Its subcellular location is the secreted. In terms of biological role, exhibits antimicrobial activity against Gram-negative bacteria and Gram-positive bacteria, with highest activity against Gram-negative bacteria. Antimicrobial activity against P.aruginosa seems to be salt-sensitive and is reduced with high salt concentrations greater than 25 mM. Also exhibits antimicrobial activity against the yeast C.albicans. Permeabilizes C.albicans cell membranes via targeting plasma membrane lipid phosphatidylinositol 4,5-bisphosphate (PIP2), thereby leading to cell fragmentation and cell death. Acts as a ligand for C-C chemokine receptor CCR6. Binds to CCR6 and induces chemotactic activity of CCR6-expressing cells, such as immature dendritic cells and memory T cells. This is Defensin beta 4A (DEFB4A) from Homo sapiens (Human).